Reading from the N-terminus, the 167-residue chain is Translationally-controlled tumor protein homolog (167 aa).

A TCTP domain is found at methionine 1–isoleucine 167.

The protein belongs to the TCTP family.

It is found in the cytoplasm. The protein resides in the cytoskeleton. Functionally, involved in protein synthesis. Involved in microtubule stabilization. The polypeptide is Translationally-controlled tumor protein homolog (Candida glabrata (strain ATCC 2001 / BCRC 20586 / JCM 3761 / NBRC 0622 / NRRL Y-65 / CBS 138) (Yeast)).